The sequence spans 43 residues: Jararafibrase-3 (43 aa).

One can recognise a C-type lectin domain in the interval 10 to 43 (MNGLYYKIFDELKAWKDAEMFCRKYKPGWHLASF).

The protein belongs to the true venom lectin family. In terms of assembly, monomer. Expressed by the venom gland.

It is found in the secreted. Its activity is regulated as follows. Inhibited by 1,10-phenanthroline and EDTA. In terms of biological role, may have both metalloproteinase and lectin activities. Induces local hemorrhage in the skin of rats. Degrades type-IV collagen, gelatin, laminin and fibronectin. Has hemagglutinating activity on red blood cells. This Bothrops jararaca (Jararaca) protein is Jararafibrase-3.